We begin with the raw amino-acid sequence, 394 residues long: Chorismate synthase (394 aa).

NADP(+) is bound by residues arginine 40 and arginine 46. Residues 135–137 (RAS), 255–256 (QA), glycine 302, 317–321 (KPISS), and arginine 343 contribute to the FMN site.

The protein belongs to the chorismate synthase family. As to quaternary structure, homotetramer. The cofactor is FMNH2.

The enzyme catalyses 5-O-(1-carboxyvinyl)-3-phosphoshikimate = chorismate + phosphate. It participates in metabolic intermediate biosynthesis; chorismate biosynthesis; chorismate from D-erythrose 4-phosphate and phosphoenolpyruvate: step 7/7. Functionally, catalyzes the anti-1,4-elimination of the C-3 phosphate and the C-6 proR hydrogen from 5-enolpyruvylshikimate-3-phosphate (EPSP) to yield chorismate, which is the branch point compound that serves as the starting substrate for the three terminal pathways of aromatic amino acid biosynthesis. This reaction introduces a second double bond into the aromatic ring system. The protein is Chorismate synthase of Frankia alni (strain DSM 45986 / CECT 9034 / ACN14a).